A 476-amino-acid chain; its full sequence is F-box protein At5g07670 (476 aa).

Residues 59–111 (PDFTLLLPDLILIRVIQKIPNSQRKNLSLVCKRWFRLHGRLVRSFKVSDWEFL) form the F-box domain.

This Arabidopsis thaliana (Mouse-ear cress) protein is F-box protein At5g07670.